The sequence spans 184 residues: Inosine triphosphate pyrophosphatase (184 aa).

Residue 9-14 (TSNASK) coordinates ITP. Mg(2+) is bound at residue Glu-38. Residues Lys-50, 66 to 67 (DT), Lys-83, 142 to 145 (FGWD), Lys-163, and 168 to 169 (HR) contribute to the ITP site.

Belongs to the HAM1 NTPase family. As to quaternary structure, homodimer. Requires Mg(2+) as cofactor. The cofactor is Mn(2+).

The protein resides in the cytoplasm. It is found in the nucleus. It catalyses the reaction ITP + H2O = IMP + diphosphate + H(+). It carries out the reaction dITP + H2O = dIMP + diphosphate + H(+). The catalysed reaction is XTP + H2O = XMP + diphosphate + H(+). In terms of biological role, pyrophosphatase that hydrolyzes non-canonical purine nucleotides such as inosine triphosphate (ITP), deoxyinosine triphosphate (dITP) or xanthosine 5'-triphosphate (XTP) to their respective monophosphate derivatives. The enzyme does not distinguish between the deoxy- and ribose forms. Probably excludes non-canonical purines from RNA and DNA precursor pools, thus preventing their incorporation into RNA and DNA and avoiding chromosomal lesions. This chain is Inosine triphosphate pyrophosphatase, found in Tuber melanosporum (strain Mel28) (Perigord black truffle).